Consider the following 408-residue polypeptide: Peptidase T (408 aa).

H78 contributes to the Zn(2+) binding site. D80 is a catalytic residue. D141 is a Zn(2+) binding site. E175 functions as the Proton acceptor in the catalytic mechanism. Positions 176, 198, and 380 each coordinate Zn(2+).

This sequence belongs to the peptidase M20B family. The cofactor is Zn(2+).

The protein resides in the cytoplasm. It carries out the reaction Release of the N-terminal residue from a tripeptide.. In terms of biological role, cleaves the N-terminal amino acid of tripeptides. This Clostridium botulinum (strain 657 / Type Ba4) protein is Peptidase T.